The primary structure comprises 308 residues: tRNA pseudouridine synthase B (308 aa).

Asp47 functions as the Nucleophile in the catalytic mechanism.

This sequence belongs to the pseudouridine synthase TruB family. Type 1 subfamily.

The enzyme catalyses uridine(55) in tRNA = pseudouridine(55) in tRNA. Functionally, responsible for synthesis of pseudouridine from uracil-55 in the psi GC loop of transfer RNAs. The protein is tRNA pseudouridine synthase B of Xanthomonas campestris pv. campestris (strain 8004).